Here is a 267-residue protein sequence, read N- to C-terminus: X-box-binding protein 1 (267 aa).

The Cytoplasmic segment spans residues methionine 1–asparagine 180. Positions valine 35–leucine 60 are disordered. A Phosphoserine modification is found at serine 61. A bZIP domain is found at glutamate 63–leucine 126. A basic motif region spans residues lysine 65–arginine 87. The interval arginine 69 to lysine 85 is nuclear localization signal (NLS). The tract at residues leucine 91–leucine 126 is leucine-zipper. A helical; Signal-anchor for type II membrane protein transmembrane segment spans residues isoleucine 181–serine 198. Residues phenylalanine 199–leucine 267 are Lumenal-facing.

The protein belongs to the bZIP family. As to quaternary structure, isoform 1 interacts with HM13. Isoform 1 interacts with RNF139; the interaction induces ubiquitination and degradation of isoform 1. Isoform 1 interacts (via luminal domain) with DERL1; the interaction obviates the need for ectodomain shedding prior HM13/SPP-mediated XBP1 isoform 1 cleavage. Isoform 1 interacts with HDAC3 and AKT1; the interactions occur in endothelial cell (EC) under disturbed flow. Isoform 1 interacts with the oncoprotein FOS. Interacts with SIRT1. Post-translationally, isoform 1 is ubiquitinated, leading to proteasome-mediated degradation in response to ER stress. X-box-binding protein 1, cytoplasmic form and luminal form are produced by intramembrane proteolytic cleavage of ER membrane-anchored isoform 1 triggered by HM13/SPP in a DERL1-RNF139-dependent and VCP/p97-independent manner. X-box-binding protein 1, luminal form is ubiquitinated leading to proteasomal degradation. In terms of processing, acetylated by EP300; acetylation positively regulates the transcriptional activity of XBP1. Deacetylated by SIRT1; deacetylation negatively regulates the transcriptional activity of XBP1.

The protein resides in the nucleus. It localises to the endoplasmic reticulum. Its subcellular location is the cytoplasm. It is found in the endoplasmic reticulum membrane. The protein localises to the membrane. Functions as a transcription factor during endoplasmic reticulum (ER) stress by regulating the unfolded protein response (UPR). Required for cardiac myogenesis and hepatogenesis during embryonic development, and the development of secretory tissues such as exocrine pancreas and salivary gland. Involved in terminal differentiation of B lymphocytes to plasma cells and production of immunoglobulins. Modulates the cellular response to ER stress in a PIK3R-dependent manner. Binds to the cis-acting X box present in the promoter regions of major histocompatibility complex class II genes. Involved in VEGF-induced endothelial cell (EC) proliferation and retinal blood vessel formation during embryonic development but also for angiogenesis in adult tissues under ischemic conditions. Functions also as a major regulator of the UPR in obesity-induced insulin resistance and type 2 diabetes for the management of obesity and diabetes prevention. Functionally, acts as a weak transcriptional factor. Together with HDAC3, contributes to the activation of NFE2L2-mediated HMOX1 transcription factor gene expression in a PI(3)K/mTORC2/Akt-dependent signaling pathway leading to EC survival under disturbed flow/oxidative stress. Binds to the ER stress response element (ERSE) upon ER stress. Binds to the consensus 5'-GATGACGTG[TG]N(3)[AT]T-3' sequence related to cAMP responsive element (CRE)-like sequences. Associates preferentially to the HDAC3 gene promoter region in a static flow-dependent manner. Binds to the CDH5/VE-cadherin gene promoter region. The sequence is that of X-box-binding protein 1 from Rattus norvegicus (Rat).